Reading from the N-terminus, the 445-residue chain is Phosphoglucosamine mutase (445 aa).

Ser-102 serves as the catalytic Phosphoserine intermediate. Ser-102, Asp-241, Asp-243, and Asp-245 together coordinate Mg(2+). Position 102 is a phosphoserine (Ser-102).

It belongs to the phosphohexose mutase family. Requires Mg(2+) as cofactor. Activated by phosphorylation.

The catalysed reaction is alpha-D-glucosamine 1-phosphate = D-glucosamine 6-phosphate. In terms of biological role, catalyzes the conversion of glucosamine-6-phosphate to glucosamine-1-phosphate. The polypeptide is Phosphoglucosamine mutase (Shewanella baltica (strain OS155 / ATCC BAA-1091)).